The following is a 392-amino-acid chain: Chorismate synthase (392 aa).

Residues Arg39 and Arg45 each coordinate NADP(+). FMN is bound by residues 131-133 (RSS), 255-256 (NA), Gly300, 315-319 (KPIPT), and Arg341.

Belongs to the chorismate synthase family. As to quaternary structure, homotetramer. FMNH2 serves as cofactor.

It catalyses the reaction 5-O-(1-carboxyvinyl)-3-phosphoshikimate = chorismate + phosphate. The protein operates within metabolic intermediate biosynthesis; chorismate biosynthesis; chorismate from D-erythrose 4-phosphate and phosphoenolpyruvate: step 7/7. Functionally, catalyzes the anti-1,4-elimination of the C-3 phosphate and the C-6 proR hydrogen from 5-enolpyruvylshikimate-3-phosphate (EPSP) to yield chorismate, which is the branch point compound that serves as the starting substrate for the three terminal pathways of aromatic amino acid biosynthesis. This reaction introduces a second double bond into the aromatic ring system. The chain is Chorismate synthase from Leuconostoc citreum (strain KM20).